We begin with the raw amino-acid sequence, 340 residues long: Replication factor C subunit 3 (340 aa).

The residue at position 2 (serine 2) is an N-acetylserine. ATP contacts are provided by residues 16-19 (VEKY), arginine 20, tyrosine 28, 53-61 (GPPGTGKTS), asparagine 148, and arginine 206.

The protein belongs to the activator 1 small subunits family. Replication factor C (RFC) is a heteropentamer of subunits RFC1, RFC2, RFC3, RFC4 and RFC5 and forms a complex with POL30/PCNA in the presence of ATP. Component of the RAD24-RFC complex which consists of RAD14, RFC2, RFC3, RFC4 and RFC5 and associates with the checkpoint clamp DDC1:MEC3:RAD17 complex. Component of the ELG1-RFC complex which consists of ELG1, RFC2, RFC3, RFC4 and RFC5. Component of the CTF18-RFC complex, which consists of CTF18, CTF8, DCC1, RFC2, RFC3, RFC4 and RFC5. RFC3 interacts with ECO1 and POL30/PCNA.

It is found in the nucleus. Its function is as follows. Component of ATP-dependent clamp loader (RFC and RFC-like) complexes for DNA clamps, such as the POL30/PCNA homotrimer and the checkpoint clamp DDC1:MEC3:RAD17 complex. During a clamp loading circle, the RFC:clamp complex binds to DNA and the recognition of the double-stranded/single-stranded junction stimulates ATP hydrolysis by RFC. The complex presumably provides bipartite ATP sites in which one subunit supplies a catalytic site for hydrolysis of ATP bound to the neighboring subunit. Dissociation of RFC from the clamp leaves the clamp encircling DNA. Component of the replication factor C (RFC or activator 1) complex which loads POL30/PCNA and acts during elongation of primed DNA templates by DNA polymerase delta and epsilon. RFC has an essential but redundant activity in sister chromatid cohesion establishment. Component of the RFC-like complex CTF18-RFC which is required for efficient establishment of chromosome cohesion during S-phase and may load or unload POL30/PCNA. Component of the RFC-like RAD24-RFC complex which loads the checkpoint clamp DDC1:MEC3:RAD17 complex and is involved in DNA repair pathways. Component of the RFC-like ELG1-RFC complex which appears to have a role in DNA replication, replication fork re-start, recombination and repair. RFC3 supplies a catalytic site to the ATP site of RFC4. This Saccharomyces cerevisiae (strain ATCC 204508 / S288c) (Baker's yeast) protein is Replication factor C subunit 3 (RFC3).